The primary structure comprises 519 residues: Probable anion transporter 3, chloroplastic (519 aa).

The N-terminal 76 residues, 1 to 76 (MAPPGQLLPL…PPPPATSLPG (76 aa)), are a transit peptide targeting the chloroplast. The span at 56-72 (LPFAPPRRLSRPPPPAT) shows a compositional bias: pro residues. The segment at 56–82 (LPFAPPRRLSRPPPPATSLPGASPGGG) is disordered. Transmembrane regions (helical) follow at residues 100–120 (VAAM…VMSV), 138–158 (VVQS…GALV), 166–186 (VMAY…WAAA), 188–208 (SLWL…VALP), 229–249 (IAMA…PIIM), 253–273 (GIFG…LVWI), 326–346 (WALI…LSWM), 362–382 (AWFS…AGVV), 403–423 (IGFV…SPVI), 424–444 (ASAW…GFLV), 460–480 (MSNT…GFFV), and 488–508 (GFLI…DIFA).

It belongs to the major facilitator superfamily. Sodium/anion cotransporter (TC 2.A.1.14) family.

Its subcellular location is the plastid. It is found in the chloroplast membrane. Functionally, probable anion transporter. This is Probable anion transporter 3, chloroplastic (PHT4;3) from Oryza sativa subsp. japonica (Rice).